A 485-amino-acid chain; its full sequence is Alpha-amylase (485 aa).

Residues 1-18 (MQHLSILLVVLGSSIAFA) form the signal peptide. At Gln-19 the chain carries Pyrrolidone carboxylic acid. An intrachain disulfide couples Cys-46 to Cys-102. Residues Asn-116, Arg-163, and Asp-172 each contribute to the Ca(2+) site. Residues Cys-152 and Cys-165 are joined by a disulfide bond. Chloride is bound at residue Arg-200. The Nucleophile role is filled by Asp-202. A Ca(2+)-binding site is contributed by His-206. Glu-238 acts as the Proton donor in catalysis. Asn-301 is a chloride binding site. Cys-369 and Cys-375 are joined by a disulfide. Residues Asn-423 and Asn-449 are each glycosylated (N-linked (GlcNAc...) asparagine). A disulfide bond links Cys-440 and Cys-452.

It belongs to the glycosyl hydrolase 13 family. Monomer. Requires Ca(2+) as cofactor. It depends on chloride as a cofactor.

It carries out the reaction Endohydrolysis of (1-&gt;4)-alpha-D-glucosidic linkages in polysaccharides containing three or more (1-&gt;4)-alpha-linked D-glucose units.. Its function is as follows. Involved in the digestion of starch. The protein is Alpha-amylase of Hypothenemus hampei (Coffee berry borer).